The primary structure comprises 328 residues: UPF0194 membrane protein YPTS_1292 (328 aa).

Positions 1–22 (MNRKKIIVAAVIVALLATLAYG) are cleaved as a signal peptide. Coiled-coil stretches lie at residues 80–109 (YLNA…REEE) and 142–209 (AVSA…ILLA).

It belongs to the UPF0194 family.

Its subcellular location is the periplasm. This Yersinia pseudotuberculosis serotype IB (strain PB1/+) protein is UPF0194 membrane protein YPTS_1292.